A 320-amino-acid chain; its full sequence is ATP-dependent 6-phosphofructokinase (320 aa).

G12 lines the ATP pocket. ADP contacts are provided by residues 22–26 (RSVVR) and 55–60 (RYSVSD). ATP-binding positions include 73 to 74 (RF) and 103 to 106 (GDGS). D104 is a Mg(2+) binding site. 126 to 128 (TID) is a substrate binding site. Catalysis depends on D128, which acts as the Proton acceptor. Residue R155 participates in ADP binding. Residues R163 and 170-172 (MGR) contribute to the substrate site. ADP-binding positions include 186-188 (GCE) and 214-216 (KKH). Substrate-binding positions include E223, R244, and 250 to 253 (HIQR).

This sequence belongs to the phosphofructokinase type A (PFKA) family. ATP-dependent PFK group I subfamily. Prokaryotic clade 'B1' sub-subfamily. In terms of assembly, homotetramer. It depends on Mg(2+) as a cofactor.

The protein resides in the cytoplasm. The enzyme catalyses beta-D-fructose 6-phosphate + ATP = beta-D-fructose 1,6-bisphosphate + ADP + H(+). It functions in the pathway carbohydrate degradation; glycolysis; D-glyceraldehyde 3-phosphate and glycerone phosphate from D-glucose: step 3/4. With respect to regulation, allosterically activated by ADP and other diphosphonucleosides, and allosterically inhibited by phosphoenolpyruvate. In terms of biological role, catalyzes the phosphorylation of D-fructose 6-phosphate to fructose 1,6-bisphosphate by ATP, the first committing step of glycolysis. The sequence is that of ATP-dependent 6-phosphofructokinase from Baumannia cicadellinicola subsp. Homalodisca coagulata.